Consider the following 320-residue polypeptide: Acetyl-coenzyme A carboxylase carboxyl transferase subunit alpha (320 aa).

Positions 42 to 295 (IGDKAAQALK…GDAIAEAFND (254 aa)) constitute a CoA carboxyltransferase C-terminal domain.

This sequence belongs to the AccA family. In terms of assembly, acetyl-CoA carboxylase is a heterohexamer composed of biotin carboxyl carrier protein (AccB), biotin carboxylase (AccC) and two subunits each of ACCase subunit alpha (AccA) and ACCase subunit beta (AccD).

The protein resides in the cytoplasm. It catalyses the reaction N(6)-carboxybiotinyl-L-lysyl-[protein] + acetyl-CoA = N(6)-biotinyl-L-lysyl-[protein] + malonyl-CoA. It functions in the pathway lipid metabolism; malonyl-CoA biosynthesis; malonyl-CoA from acetyl-CoA: step 1/1. Component of the acetyl coenzyme A carboxylase (ACC) complex. First, biotin carboxylase catalyzes the carboxylation of biotin on its carrier protein (BCCP) and then the CO(2) group is transferred by the carboxyltransferase to acetyl-CoA to form malonyl-CoA. The chain is Acetyl-coenzyme A carboxylase carboxyl transferase subunit alpha from Nitrobacter hamburgensis (strain DSM 10229 / NCIMB 13809 / X14).